A 102-amino-acid polypeptide reads, in one-letter code: Small ribosomal subunit protein uS14 (102 aa).

This sequence belongs to the universal ribosomal protein uS14 family. In terms of assembly, part of the 30S ribosomal subunit. Contacts proteins S3 and S10.

Its function is as follows. Binds 16S rRNA, required for the assembly of 30S particles and may also be responsible for determining the conformation of the 16S rRNA at the A site. This chain is Small ribosomal subunit protein uS14, found in Wolbachia pipientis wMel.